We begin with the raw amino-acid sequence, 268 residues long: Probable chemotaxis protein methyltransferase (268 aa).

The CheR-type methyltransferase domain occupies 1 to 262 (MIYSDAGIFL…GITTYRYTTK (262 aa)). S-adenosyl-L-methionine-binding positions include asparagine 60, threonine 62, arginine 66, glutamate 104, aspartate 130, 188–189 (NL), and 205–206 (RN).

The enzyme catalyses L-glutamyl-[protein] + S-adenosyl-L-methionine = [protein]-L-glutamate 5-O-methyl ester + S-adenosyl-L-homocysteine. Its function is as follows. Methylation of the membrane-bound methyl-accepting chemotaxis proteins (MCP) to form gamma-glutamyl methyl ester residues in MCP. In Rhizobium etli (strain ATCC 51251 / DSM 11541 / JCM 21823 / NBRC 15573 / CFN 42), this protein is Probable chemotaxis protein methyltransferase (cheRch1).